A 599-amino-acid chain; its full sequence is uncharacterized protein (599 aa).

A compositionally biased stretch (low complexity) spans 1–13 (MSSSSSHNSFSGS). 2 disordered regions span residues 1–27 (MSSS…IDGL) and 41–86 (YPSN…DDTN). The segment covering 14–27 (KTNAAEGQNSIDGL) has biased composition (polar residues). Over residues 44–70 (NEEKEVKETDIVPDENKVNELDVHKQS) the composition is skewed to basic and acidic residues. A run of 14 helical transmembrane segments spans residues 97–117 (IVVP…TIVT), 135–155 (WIGS…GVFC), 162–182 (IVLY…GASQ), 192–212 (AIQG…ISDI), 223–243 (GILA…GGAI), 251–271 (WIFF…VVFL), 290–310 (FIGL…ISLG), 321–341 (ILCY…YDTF), 359–379 (AALL…AYYV), 396–416 (VHTI…GMVL), 423–443 (LPLI…MICV), 452–472 (VMGL…PPLI), 489–509 (TLMF…EVIF), and 552–572 (VIWI…FFIK).

This sequence belongs to the major facilitator superfamily. TCR/Tet family.

The protein resides in the membrane. This is an uncharacterized protein from Schizosaccharomyces pombe (strain 972 / ATCC 24843) (Fission yeast).